Consider the following 1551-residue polypeptide: Dual oxidase 1 (1551 aa).

The first 21 residues, 1 to 21 (MGFCLALTWTFLVGSWTSMGA), serve as a signal peptide directing secretion. Residues 22-596 (QKPISWEVQR…YFEGSGFGFG (575 aa)) are Extracellular-facing. The peroxidase-like; mediates peroxidase activity stretch occupies residues 26-593 (SWEVQRFDGW…MQDYFEGSGF (568 aa)). Asn94 carries an N-linked (GlcNAc...) asparagine glycan. The disordered stretch occupies residues 197–222 (LASGPDPAFPRNAQPPLLMWSAPDPA). Residues Asn342, Asn354, Asn461, and Asn534 are each glycosylated (N-linked (GlcNAc...) asparagine). Residues 597 to 617 (VTIGTLCCFPLVSLLSAWIVA) traverse the membrane as a helical segment. Residues 618-1044 (RLRKKNFKKL…KRFIENYRRH (427 aa)) are Cytoplasmic-facing. EF-hand domains follow at residues 815 to 850 (PQDM…FMKG), 851 to 886 (SPEE…FIEI), and 895 to 930 (QLTE…HDSE). Residues Asp828, Asp830, Asn832, Tyr834, Glu839, Asp864, Asp866, Asn868, and Glu875 each contribute to the Ca(2+) site. Residues 956–1248 (YISQEKICPS…GSFGLIQLPR (293 aa)) are interaction with TXNDC11. Residues 1045 to 1065 (IGCVAVFYAITGGLFLERAYY) form a helical membrane-spanning segment. At 1066–1080 (YAFGAHHMGITDTTR) the chain is on the extracellular side. The helical transmembrane segment at 1081–1101 (VGIILSRGTAASISFMFSYIL) threads the bilayer. One can recognise a Ferric oxidoreductase domain in the interval 1087 to 1269 (RGTAASISFM…YVGDKLVSLS (183 aa)). The Cytoplasmic segment spans residues 1102–1151 (LTMCRNLITFLRETFLNRYVPFDAAVDFHRLIASTAIVLTVLHSAGHVVN). The chain crosses the membrane as a helical span at residues 1152–1172 (VYLFSISPLSVLSCLFPGLFH). The Extracellular portion of the chain corresponds to 1173 to 1188 (NDGSEFPQKYYWWFFQ). The helical transmembrane segment at 1189–1209 (TVPGLTGVMLLLVLAIMYVFA) threads the bilayer. The Cytoplasmic segment spans residues 1210-1226 (SHHFRRHSFRGFWLTHH). The helical transmembrane segment at 1227 to 1247 (LYILLYVLLIIHGSFGLIQLP) threads the bilayer. Arg1248 is a topological domain (extracellular). The helical transmembrane segment at 1249-1269 (FHIFFLVPALIYVGDKLVSLS) threads the bilayer. Residues 1270-1376 (RKKVEISVVK…DGPFGEGHQE (107 aa)) enclose the FAD-binding FR-type domain. The Cytoplasmic portion of the chain corresponds to 1270–1551 (RKKVEISVVK…THFSHHYENF (282 aa)).

This sequence in the N-terminal section; belongs to the peroxidase family. As to quaternary structure, interacts with TPO and CYBA. Interacts with TXNDC11. In terms of processing, N-glycosylated. In terms of tissue distribution, expressed in thyrocytes (at protein level). Specifically expressed in thyroid.

The protein resides in the apical cell membrane. It catalyses the reaction NADH + O2 + H(+) = H2O2 + NAD(+). The enzyme catalyses NADPH + O2 + H(+) = H2O2 + NADP(+). It participates in hormone biosynthesis; thyroid hormone biosynthesis. Its activity is regulated as follows. Peroxidase activity is inhibited by aminobenzohydrazide. The NADPH oxidase activity is calcium-dependent. Its function is as follows. Generates hydrogen peroxide which is required for the activity of thyroid peroxidase/TPO and lactoperoxidase/LPO. Plays a role in thyroid hormones synthesis and lactoperoxidase-mediated antimicrobial defense at the surface of mucosa. May have its own peroxidase activity through its N-terminal peroxidase-like domain. This Canis lupus familiaris (Dog) protein is Dual oxidase 1 (DUOX1).